The sequence spans 164 residues: Anthrone oxygenase AgnL2 (164 aa).

A run of 3 helical transmembrane segments spans residues 11–31 (VVTGSFLSGAMISLSLMAVPV), 48–70 (RMYHYGHQVLPTMAVATTLLYAY), and 85–105 (VFALAGTITVSMIPFTWLCMV).

This sequence belongs to the anthrone oxygenase family.

Its subcellular location is the membrane. The catalysed reaction is emodin anthrone + O2 = emodin + H2O + H(+). It functions in the pathway secondary metabolite biosynthesis. Functionally, anthrone oxygenase; part of the gene cluster that mediates the biosynthesis of agnestins, dihydroxy-xanthone metabolites. The pathway begins with the assembly and cyclization of atrochrysone thioester by the non-reducing polyketide synthase Agnpks1. The atrochrysone carboxyl ACP thioesterase AgnL7 then breaks the thioester bond and releases the atrochrysone carboxylic acid as the first enzyme-free intermediate. The decarboxylase AgnL1 then catalyzes the concerted decarboxylation-elimination required to convert atochrysone carboxylic acid into emodin anthrone, which is further oxidized to emodin by the anthrone oxygenase AgnL2. Emodin then undergoes reduction catalyzed by the oxidoreductase AgnL4 to yield the dihydroquinone tautomer which is the substrate for reduction by the short chain dehydrogenase AgnL6 reduction to produce hydroxyketone, followed by AgnL8 dehydration and likely spontaneous autoxidation to chrysophanol. Baeyer-Villiger oxidation by the oxidase AgnL3 leads to monodictyphenone via cleavage of the C-10/C-10a bond of chrysophanol. Alternative cleavage at the C-4a/C-10 bond of chrysophanol also leads to the formation some cephalone F. Further conversion to agnestins A and B, requires reduction to dihydro-monodictyphenone, oxidation to agnestin C probably via an epoxide, and rearrangement to either agnestin A or agnestin B directly, although agnestin A or agnestin B can also interconvert. Within the cluster, AgnR1 is the only unassigned oxidoreductase present which could be involved in this conversion. However, AgnR1 seems not to be involved in this step, and thus genes involved in the proposed oxidation/reduction may be located elsewhere on the genome. Further agnestin A derivatives are probably formed by spontaneous decarboxylations, dehydrations and methanolysis reactions. This chain is Anthrone oxygenase AgnL2, found in Paecilomyces divaricatus (Penicillium divaricatum).